We begin with the raw amino-acid sequence, 993 residues long: UPF0182 protein MAP_3291c (993 aa).

The next 7 membrane-spanning stretches (helical) occupy residues 18–38 (ILIL…RLID), 63–83 (FVVF…GLAV), 113–133 (LVSV…AQSY), 175–195 (FVAV…FGGI), 210–230 (IQLV…YWLD), 254–274 (AVLP…AAVF), and 287–307 (IGLV…PLIV). The segment at 903 to 941 (NIQPTEGGAPAASPPANAPAPAVTPGSAPPVAAPPVPDG) is disordered. A compositionally biased stretch (pro residues) spans 929-939 (SAPPVAAPPVP).

The protein belongs to the UPF0182 family.

It localises to the cell membrane. The chain is UPF0182 protein MAP_3291c from Mycolicibacterium paratuberculosis (strain ATCC BAA-968 / K-10) (Mycobacterium paratuberculosis).